The primary structure comprises 183 residues: Adenine phosphoribosyltransferase (183 aa).

This sequence belongs to the purine/pyrimidine phosphoribosyltransferase family. Homodimer.

It is found in the cytoplasm. The catalysed reaction is AMP + diphosphate = 5-phospho-alpha-D-ribose 1-diphosphate + adenine. Its pathway is purine metabolism; AMP biosynthesis via salvage pathway; AMP from adenine: step 1/1. Its function is as follows. Catalyzes a salvage reaction resulting in the formation of AMP, that is energically less costly than de novo synthesis. The protein is Adenine phosphoribosyltransferase of Blochmanniella floridana.